Reading from the N-terminus, the 493-residue chain is Alpha-amylase-related protein (493 aa).

The signal sequence occupies residues 1–19 (MFKLAFTLTLCLAGSLSLA). At glutamine 20 the chain carries Pyrrolidone carboxylic acid. Cysteine 47 and cysteine 103 are oxidised to a cystine. Ca(2+) is bound by residues asparagine 117, glutamine 168, and aspartate 177. The cysteines at positions 156 and 170 are disulfide-linked. Arginine 205 contributes to the chloride binding site. The active-site Nucleophile is the aspartate 207. Residue histidine 211 participates in Ca(2+) binding. Glutamate 244 serves as the catalytic Proton donor. Chloride contacts are provided by asparagine 307 and arginine 342. 3 disulfide bridges follow: cysteine 375/cysteine 381, cysteine 417/cysteine 440, and cysteine 447/cysteine 459.

The protein belongs to the glycosyl hydrolase 13 family. In terms of assembly, monomer. The cofactor is Ca(2+). Requires chloride as cofactor.

It is found in the secreted. The enzyme catalyses Endohydrolysis of (1-&gt;4)-alpha-D-glucosidic linkages in polysaccharides containing three or more (1-&gt;4)-alpha-linked D-glucose units.. The polypeptide is Alpha-amylase-related protein (Amyrel) (Drosophila orena (Fruit fly)).